Consider the following 200-residue polypeptide: 3-isopropylmalate dehydratase small subunit (200 aa).

The protein belongs to the LeuD family. LeuD type 1 subfamily. As to quaternary structure, heterodimer of LeuC and LeuD.

The catalysed reaction is (2R,3S)-3-isopropylmalate = (2S)-2-isopropylmalate. It participates in amino-acid biosynthesis; L-leucine biosynthesis; L-leucine from 3-methyl-2-oxobutanoate: step 2/4. Functionally, catalyzes the isomerization between 2-isopropylmalate and 3-isopropylmalate, via the formation of 2-isopropylmaleate. The sequence is that of 3-isopropylmalate dehydratase small subunit from Erythrobacter litoralis (strain HTCC2594).